The chain runs to 142 residues: Large ribosomal subunit protein uL13 (142 aa).

The protein belongs to the universal ribosomal protein uL13 family. Part of the 50S ribosomal subunit.

Its function is as follows. This protein is one of the early assembly proteins of the 50S ribosomal subunit, although it is not seen to bind rRNA by itself. It is important during the early stages of 50S assembly. The sequence is that of Large ribosomal subunit protein uL13 from Trichlorobacter lovleyi (strain ATCC BAA-1151 / DSM 17278 / SZ) (Geobacter lovleyi).